We begin with the raw amino-acid sequence, 205 residues long: ATP-dependent Clp protease proteolytic subunit (205 aa).

The active-site Nucleophile is S109. H134 is an active-site residue.

The protein belongs to the peptidase S14 family. In terms of assembly, fourteen ClpP subunits assemble into 2 heptameric rings which stack back to back to give a disk-like structure with a central cavity, resembling the structure of eukaryotic proteasomes.

It is found in the cytoplasm. It catalyses the reaction Hydrolysis of proteins to small peptides in the presence of ATP and magnesium. alpha-casein is the usual test substrate. In the absence of ATP, only oligopeptides shorter than five residues are hydrolyzed (such as succinyl-Leu-Tyr-|-NHMec, and Leu-Tyr-Leu-|-Tyr-Trp, in which cleavage of the -Tyr-|-Leu- and -Tyr-|-Trp bonds also occurs).. In terms of biological role, cleaves peptides in various proteins in a process that requires ATP hydrolysis. Has a chymotrypsin-like activity. Plays a major role in the degradation of misfolded proteins. In Buchnera aphidicola subsp. Baizongia pistaciae (strain Bp), this protein is ATP-dependent Clp protease proteolytic subunit.